Consider the following 579-residue polypeptide: Arginine--tRNA ligase (579 aa).

The 'HIGH' region signature appears at 123 to 133 (PNLAKEMHVGH).

The protein belongs to the class-I aminoacyl-tRNA synthetase family. In terms of assembly, monomer.

Its subcellular location is the cytoplasm. The enzyme catalyses tRNA(Arg) + L-arginine + ATP = L-arginyl-tRNA(Arg) + AMP + diphosphate. In Saccharophagus degradans (strain 2-40 / ATCC 43961 / DSM 17024), this protein is Arginine--tRNA ligase.